Consider the following 430-residue polypeptide: DD-carboxypeptidase/endopeptidase Mpg (430 aa).

Zn(2+) is bound by residues H295, D299, and H375.

Belongs to the peptidase M23B family. In terms of assembly, monomer. Zn(2+) serves as cofactor. Post-translationally, likely to be synthesized as a proenzyme. The cleavage of the N-terminal domain is probably required for the activation of the enzyme.

The protein resides in the cell outer membrane. Peptidoglycan (PG) degradation activity is completely inhibited by zinc chelating EDTA and phenanthroline. Functionally, has both endopeptidase and DD-carboxypeptidase activities. Degrades cell wall peptidoglycan (PG) to allow consummate expression of pili. Degrades N.gonorrhoeae and E.coli PG side chains in vitro. Required for proper piliation, which in turn is required for normal colony morphology, resistance to H(2)O(2) damage and defense against killing by human polymorphonuclear leukocytes (PMNs). Involved in type IV pilus biogenesis. Involved in resistance against non-oxidative killing by adherent CXCL8/IL8-primed human PMNs. Protects from killing by PMN-produced antimicrobial factors, which kill by a mechanism completely independent of reactive oxygen species (ROS) production of the PMNs. Provides protection against oxidative damage caused by peroxides H(2)O(2) and cumene hydroperoxide in vitro. This is DD-carboxypeptidase/endopeptidase Mpg from Neisseria gonorrhoeae (strain ATCC 700825 / FA 1090).